Consider the following 236-residue polypeptide: Demethylmenaquinone methyltransferase (236 aa).

S-adenosyl-L-methionine-binding positions include T58, D79, and 106-107 (NA).

Belongs to the class I-like SAM-binding methyltransferase superfamily. MenG/UbiE family.

The catalysed reaction is a 2-demethylmenaquinol + S-adenosyl-L-methionine = a menaquinol + S-adenosyl-L-homocysteine + H(+). Its pathway is quinol/quinone metabolism; menaquinone biosynthesis; menaquinol from 1,4-dihydroxy-2-naphthoate: step 2/2. Functionally, methyltransferase required for the conversion of demethylmenaquinol (DMKH2) to menaquinol (MKH2). The chain is Demethylmenaquinone methyltransferase from Alkalihalophilus pseudofirmus (strain ATCC BAA-2126 / JCM 17055 / OF4) (Bacillus pseudofirmus).